The primary structure comprises 81 residues: Translational regulator CsrA (81 aa).

Over residues 59–71 (SQMQHLEQGNFPT) the composition is skewed to polar residues. The segment at 59–81 (SQMQHLEQGNFPTSFDDDDFFNR) is disordered.

It belongs to the CsrA/RsmA family. Homodimer; the beta-strands of each monomer intercalate to form a hydrophobic core, while the alpha-helices form wings that extend away from the core.

The protein localises to the cytoplasm. In terms of biological role, a key translational regulator that binds mRNA to regulate translation initiation and/or mRNA stability. Mediates global changes in gene expression, shifting from rapid growth to stress survival by linking envelope stress, the stringent response and the catabolite repression systems. Usually binds in the 5'-UTR; binding at or near the Shine-Dalgarno sequence prevents ribosome-binding, repressing translation, binding elsewhere in the 5'-UTR can activate translation and/or stabilize the mRNA. Its function is antagonized by small RNA(s). The chain is Translational regulator CsrA from Psychrobacter sp. (strain PRwf-1).